Reading from the N-terminus, the 61-residue chain is uncharacterized protein (61 aa).

Positions threonine 34–glutamate 61 form a coiled coil.

This is an uncharacterized protein from Bacillus subtilis (strain 168).